A 178-amino-acid chain; its full sequence is Large ribosomal subunit protein uL10 (178 aa).

This sequence belongs to the universal ribosomal protein uL10 family. Part of the ribosomal stalk of the 50S ribosomal subunit. The N-terminus interacts with L11 and the large rRNA to form the base of the stalk. The C-terminus forms an elongated spine to which L12 dimers bind in a sequential fashion forming a multimeric L10(L12)X complex.

Functionally, forms part of the ribosomal stalk, playing a central role in the interaction of the ribosome with GTP-bound translation factors. The sequence is that of Large ribosomal subunit protein uL10 from Leuconostoc mesenteroides subsp. mesenteroides (strain ATCC 8293 / DSM 20343 / BCRC 11652 / CCM 1803 / JCM 6124 / NCDO 523 / NBRC 100496 / NCIMB 8023 / NCTC 12954 / NRRL B-1118 / 37Y).